The chain runs to 421 residues: MTIRRPGGACLFGLLLAVSPTPFPRRTTLTPIRTLLTPFGEFFKGQASSGLVLILAAVLAFAWANSPWRESYFTLRELPLTLSLGSWTLSHGLYWWVNDLLMALFFLLVGLEIKRELRVGELRHPRQASLALFAALGGMLLPAGLYTLVNAGGPGAAGWGVPMATDIAFALGVLALLGDRVSPGLKVLLAALAILDDLGAVLVIALFYTSGLNLLALGLMGAVWALGLGLNAAGVRHLGPYAVLGAALWLTTLASGLHPTVAGVLLALTIPLGRRAEQEDAEPSPLHRLEHGLHPWSAFLILPLFALFNAGVSVAGGSLDRVTLGVVLGLIIGKPLGVVAFAWLAVQLRAASLPEDVTWPGMLGLGLLAGIGFTMALFIGGLAFPEGALLNAAKLGILTASVLAALAAITVLTRAFPRQPR.

11 helical membrane-spanning segments follow: residues S48–W68, L93–I113, S129–V149, A157–L177, V187–F207, L215–V235, L253–G273, F299–L319, V326–V346, G364–F384, and A392–L412.

This sequence belongs to the NhaA Na(+)/H(+) (TC 2.A.33) antiporter family.

It is found in the cell membrane. It catalyses the reaction Na(+)(in) + 2 H(+)(out) = Na(+)(out) + 2 H(+)(in). Functionally, na(+)/H(+) antiporter that extrudes sodium in exchange for external protons. The chain is Na(+)/H(+) antiporter NhaA 1 from Deinococcus geothermalis (strain DSM 11300 / CIP 105573 / AG-3a).